A 321-amino-acid chain; its full sequence is Acetyl-coenzyme A carboxylase carboxyl transferase subunit beta, chloroplastic (321 aa).

The CoA carboxyltransferase N-terminal domain occupies 47–321 (LWAQCDNCEN…FWFYVLRSSL (275 aa)). Cys-51, Cys-54, Cys-70, and Cys-73 together coordinate Zn(2+). The C4-type zinc finger occupies 51 to 73 (CDNCENLLYLRFLRENQSVCKEC).

Belongs to the AccD/PCCB family. In terms of assembly, acetyl-CoA carboxylase is a heterohexamer composed of biotin carboxyl carrier protein, biotin carboxylase and 2 subunits each of ACCase subunit alpha and ACCase plastid-coded subunit beta (accD). Requires Zn(2+) as cofactor.

The protein localises to the plastid. The protein resides in the chloroplast stroma. It catalyses the reaction N(6)-carboxybiotinyl-L-lysyl-[protein] + acetyl-CoA = N(6)-biotinyl-L-lysyl-[protein] + malonyl-CoA. It participates in lipid metabolism; malonyl-CoA biosynthesis; malonyl-CoA from acetyl-CoA: step 1/1. In terms of biological role, component of the acetyl coenzyme A carboxylase (ACC) complex. Biotin carboxylase (BC) catalyzes the carboxylation of biotin on its carrier protein (BCCP) and then the CO(2) group is transferred by the transcarboxylase to acetyl-CoA to form malonyl-CoA. The sequence is that of Acetyl-coenzyme A carboxylase carboxyl transferase subunit beta, chloroplastic from Pinus thunbergii (Japanese black pine).